The sequence spans 387 residues: Phosphoglycerate kinase (387 aa).

Residues 21-23 (DLN), R36, 59-62 (HLGR), R114, and R147 each bind substrate. Residues K198, E314, and 340–343 (GGDT) each bind ATP.

It belongs to the phosphoglycerate kinase family. As to quaternary structure, monomer.

Its subcellular location is the cytoplasm. The catalysed reaction is (2R)-3-phosphoglycerate + ATP = (2R)-3-phospho-glyceroyl phosphate + ADP. The protein operates within carbohydrate degradation; glycolysis; pyruvate from D-glyceraldehyde 3-phosphate: step 2/5. This Erwinia tasmaniensis (strain DSM 17950 / CFBP 7177 / CIP 109463 / NCPPB 4357 / Et1/99) protein is Phosphoglycerate kinase.